Here is a 269-residue protein sequence, read N- to C-terminus: NAD-capped RNA hydrolase NudC (269 aa).

Substrate is bound at residue arginine 81. Cysteine 110, cysteine 113, cysteine 128, and cysteine 131 together coordinate Zn(2+). Tyrosine 136 contributes to the substrate binding site. A Nudix hydrolase domain is found at 137 to 260; it reads PRIFPCIIVA…TIARALIEQT (124 aa). Alanine 170, glutamate 186, and glutamate 190 together coordinate a divalent metal cation. The Nudix box signature appears at 171–192; it reads GFVEVGETLEQCVAREVLEETG. 204–211 is a substrate binding site; sequence QPWAFPSS. Glutamate 231 lines the a divalent metal cation pocket. Alanine 253 contacts substrate.

Belongs to the Nudix hydrolase family. NudC subfamily. In terms of assembly, homodimer. Mg(2+) serves as cofactor. Mn(2+) is required as a cofactor. The cofactor is Zn(2+).

It carries out the reaction a 5'-end NAD(+)-phospho-ribonucleoside in mRNA + H2O = a 5'-end phospho-adenosine-phospho-ribonucleoside in mRNA + beta-nicotinamide D-ribonucleotide + 2 H(+). The enzyme catalyses NAD(+) + H2O = beta-nicotinamide D-ribonucleotide + AMP + 2 H(+). It catalyses the reaction NADH + H2O = reduced beta-nicotinamide D-ribonucleotide + AMP + 2 H(+). In terms of biological role, mRNA decapping enzyme that specifically removes the nicotinamide adenine dinucleotide (NAD) cap from a subset of mRNAs by hydrolyzing the diphosphate linkage to produce nicotinamide mononucleotide (NMN) and 5' monophosphate mRNA. The NAD-cap is present at the 5'-end of some mRNAs and stabilizes RNA against 5'-processing. Has preference for mRNAs with a 5'-end purine. Catalyzes the hydrolysis of a broad range of dinucleotide pyrophosphates. The protein is NAD-capped RNA hydrolase NudC of Vibrio cholerae serotype O1 (strain ATCC 39315 / El Tor Inaba N16961).